The sequence spans 406 residues: Tryptophan 2,3-dioxygenase A (406 aa).

Substrate is bound by residues 71–75 (FIVTH) and R143. H327 contributes to the heme binding site. T341 contacts substrate.

Belongs to the tryptophan 2,3-dioxygenase family. As to quaternary structure, homotetramer. Dimer of dimers. It depends on heme as a cofactor.

The enzyme catalyses L-tryptophan + O2 = N-formyl-L-kynurenine. It functions in the pathway amino-acid degradation; L-tryptophan degradation via kynurenine pathway; L-kynurenine from L-tryptophan: step 1/2. Functionally, heme-dependent dioxygenase that catalyzes the oxidative cleavage of the L-tryptophan (L-Trp) pyrrole ring and converts L-tryptophan to N-formyl-L-kynurenine. Catalyzes the oxidative cleavage of the indole moiety. The polypeptide is Tryptophan 2,3-dioxygenase A (Danio rerio (Zebrafish)).